Here is a 468-residue protein sequence, read N- to C-terminus: Probable 1,4-beta-D-glucan cellobiohydrolase C (468 aa).

The N-terminal stretch at Met-1–Ala-18 is a signal peptide. Positions Gln-19 to Leu-54 constitute a CBM1 domain. Intrachain disulfides connect Cys-26–Cys-43 and Cys-37–Cys-53. The interval Thr-57–Thr-106 is thr-rich linker. Residues Thr-68–Ser-107 are disordered. The catalytic stretch occupies residues Ser-107–Phe-468. The active site involves Asp-198. 2 cysteine pairs are disulfide-bonded: Cys-199–Cys-258 and Cys-390–Cys-437. Residue Asp-244 is the Proton donor of the active site. Asp-423 (nucleophile) is an active-site residue.

The protein belongs to the glycosyl hydrolase 6 (cellulase B) family.

Its subcellular location is the secreted. The catalysed reaction is Hydrolysis of (1-&gt;4)-beta-D-glucosidic linkages in cellulose and cellotetraose, releasing cellobiose from the non-reducing ends of the chains.. Its function is as follows. The biological conversion of cellulose to glucose generally requires three types of hydrolytic enzymes: (1) Endoglucanases which cut internal beta-1,4-glucosidic bonds; (2) Exocellobiohydrolases that cut the disaccharide cellobiose from the non-reducing end of the cellulose polymer chain; (3) Beta-1,4-glucosidases which hydrolyze the cellobiose and other short cello-oligosaccharides to glucose. The chain is Probable 1,4-beta-D-glucan cellobiohydrolase C (cbhC) from Aspergillus terreus (strain NIH 2624 / FGSC A1156).